Consider the following 299-residue polypeptide: Probable lipid kinase YegS (299 aa).

Positions 2–133 constitute a DAGKc domain; sequence AEFPASLLIL…IDMAQVNKQT (132 aa). ATP is bound by residues T40, 66–72, and T95; that span reads GDGTINE. The Mg(2+) site is built by L215, D218, and L220. The active-site Proton acceptor is E271.

This sequence belongs to the diacylglycerol/lipid kinase family. YegS lipid kinase subfamily. Requires Mg(2+) as cofactor. Ca(2+) serves as cofactor.

It is found in the cytoplasm. Its function is as follows. Probably phosphorylates lipids; the in vivo substrate is unknown. The polypeptide is Probable lipid kinase YegS (Escherichia coli O6:K15:H31 (strain 536 / UPEC)).